A 255-amino-acid chain; its full sequence is Enkurin (255 aa).

Polar residues predominate over residues 1–10; sequence MDSPCTSESI. Disordered regions lie at residues 1–25 and 67–96; these read MDSP…PQHP and SKEK…DHPV. Over residues 73-83 the composition is skewed to basic residues; sequence PPKKKFNRCSP. An SH3-binding motif is present at residues 83-89; sequence PKKPAVP. One can recognise an Enkurin domain in the interval 160–252; that stretch reads KRNEDVKKAQ…VIEKHKIIYI (93 aa). The interval 160 to 255 is interaction with TRPC proteins; it reads KRNEDVKKAQ…KHKIIYIANK (96 aa). Residues 176 to 187 form the IQ domain; sequence IQENLKKAAMKR.

In terms of assembly, microtubule inner protein component of sperm flagellar doublet microtubules. Binds calmodulin via its IQ domain. Interacts with TRPC1, TRPC2, TRPC5, but not TRPC3. Interacts with CFAP45. High expression in testis and vomeronasal organ and lower expression in ovary, heart, lung, and brain. Not expressed in other tissues.

The protein resides in the cytoplasm. It is found in the cytoskeleton. The protein localises to the cilium axoneme. It localises to the flagellum axoneme. Its function is as follows. Adapter that functions to localize a calcium-sensitive signal transduction machinery in sperm to a calcium-permeable ion channel. Microtubule inner protein (MIP) part of the dynein-decorated doublet microtubules (DMTs) in cilia axoneme, which is required for motile cilia beating. The polypeptide is Enkurin (Enkur) (Mus musculus (Mouse)).